The chain runs to 424 residues: Phosphomethylpyrimidine synthase (424 aa).

Substrate contacts are provided by residues Asn66, Met95, Tyr124, His163, 185 to 187 (SRG), 226 to 229 (DGMR), and Glu265. Residue His269 participates in Zn(2+) binding. Phe292 lines the substrate pocket. His333 is a binding site for Zn(2+). 3 residues coordinate [4Fe-4S] cluster: Cys408, Cys411, and Cys415.

It belongs to the ThiC family. [4Fe-4S] cluster serves as cofactor.

The enzyme catalyses 5-amino-1-(5-phospho-beta-D-ribosyl)imidazole + S-adenosyl-L-methionine = 4-amino-2-methyl-5-(phosphooxymethyl)pyrimidine + CO + 5'-deoxyadenosine + formate + L-methionine + 3 H(+). The protein operates within cofactor biosynthesis; thiamine diphosphate biosynthesis. In terms of biological role, catalyzes the synthesis of the hydroxymethylpyrimidine phosphate (HMP-P) moiety of thiamine from aminoimidazole ribotide (AIR) in a radical S-adenosyl-L-methionine (SAM)-dependent reaction. This chain is Phosphomethylpyrimidine synthase, found in Thermotoga petrophila (strain ATCC BAA-488 / DSM 13995 / JCM 10881 / RKU-1).